Reading from the N-terminus, the 372-residue chain is Probable G-protein coupled receptor 45 (372 aa).

Over 1–38 the chain is Extracellular; sequence MACNSTSLEAYTYLLLNTSNASDSGSTQLPAPLRISLA. N-linked (GlcNAc...) asparagine glycans are attached at residues N4, N17, and N20. A helical transmembrane segment spans residues 39-59; that stretch reads IVMLLMTVVGFLGNTVVCIIV. Residues 60–75 lie on the Cytoplasmic side of the membrane; that stretch reads YQRPAMRSAINLLLAT. A helical transmembrane segment spans residues 76-96; sequence LAFSDIMLSLCCMPFTAVTLI. Residues 97–109 are Extracellular-facing; the sequence is TVRWHFGDHFCRL. The helical transmembrane segment at 110–130 threads the bilayer; the sequence is SATLYWFFVLEGVAILLIISV. The Cytoplasmic segment spans residues 131–149; sequence DRFLIIVQRQDKLNPRRAK. The helical transmembrane segment at 150-170 threads the bilayer; that stretch reads VIIAVSWVLSFCIAGPSLTGW. Over 171-198 the chain is Extracellular; the sequence is TLVEVPARAPQCVLGYTELPADRAYVVT. The chain crosses the membrane as a helical span at residues 199–219; that stretch reads LVVAVFFAPFGVMLCAYMCIL. The Cytoplasmic segment spans residues 220 to 268; the sequence is NTVRKNAVRVHNQSDSLDLRQLTRAGLRRLQRQQQVSVDLSFKTKAFTT. A helical transmembrane segment spans residues 269-289; it reads ILILFVGFSLCWLPHSVYSLL. Residues 290–305 are Extracellular-facing; that stretch reads SVFSQRFYCGSSFYAT. Residues 306–326 form a helical membrane-spanning segment; the sequence is STCVLWLSYLKSVFNPIVYCW. Topologically, residues 327–372 are cytoplasmic; it reads RIKKFREACIELLPQTFQILPKVPERIRRRIQPSTVYVCNENQSAV.

Belongs to the G-protein coupled receptor 1 family. Expressed in brain; detected in the basal forebrain, frontal cortex, and caudate, but not in thalamus, hippocampus, or putamen.

The protein resides in the cell membrane. Orphan receptor. May play a role in brain function. The protein is Probable G-protein coupled receptor 45 (GPR45) of Homo sapiens (Human).